The sequence spans 201 residues: Recombination protein RecR (201 aa).

The segment at 58–73 (CGRCGALTDVDPCGIC) adopts a C4-type zinc-finger fold. The Toprim domain maps to 81–178 (ETLCLVSEWD…RVTRLAQGIP (98 aa)).

Belongs to the RecR family.

Functionally, may play a role in DNA repair. It seems to be involved in an RecBC-independent recombinational process of DNA repair. It may act with RecF and RecO. This Nitratidesulfovibrio vulgaris (strain DSM 19637 / Miyazaki F) (Desulfovibrio vulgaris) protein is Recombination protein RecR.